The following is a 960-amino-acid chain: Valine--tRNA ligase (960 aa).

Positions 42–52 match the 'HIGH' region motif; sequence PNITGNLHMGH. Residues 553–557 carry the 'KMSKS' region motif; it reads KMSKS. Position 556 (K556) interacts with ATP. Residues 879–950 adopt a coiled-coil conformation; it reads VLKAIDKEIE…LSQQLESLHD (72 aa).

This sequence belongs to the class-I aminoacyl-tRNA synthetase family. ValS type 1 subfamily. In terms of assembly, monomer.

It localises to the cytoplasm. It carries out the reaction tRNA(Val) + L-valine + ATP = L-valyl-tRNA(Val) + AMP + diphosphate. Functionally, catalyzes the attachment of valine to tRNA(Val). As ValRS can inadvertently accommodate and process structurally similar amino acids such as threonine, to avoid such errors, it has a 'posttransfer' editing activity that hydrolyzes mischarged Thr-tRNA(Val) in a tRNA-dependent manner. This Buchnera aphidicola subsp. Schizaphis graminum (strain Sg) protein is Valine--tRNA ligase.